We begin with the raw amino-acid sequence, 482 residues long: 23S rRNA (uracil(1939)-C(5))-methyltransferase RlmD (482 aa).

Positions 85, 95, 98, and 177 each coordinate [4Fe-4S] cluster. S-adenosyl-L-methionine-binding residues include Gln285, Phe314, Asn319, Glu335, Asn370, and Asp391. The active-site Nucleophile is Cys438.

Belongs to the class I-like SAM-binding methyltransferase superfamily. RNA M5U methyltransferase family. RlmD subfamily.

It carries out the reaction uridine(1939) in 23S rRNA + S-adenosyl-L-methionine = 5-methyluridine(1939) in 23S rRNA + S-adenosyl-L-homocysteine + H(+). Its function is as follows. Catalyzes the formation of 5-methyl-uridine at position 1939 (m5U1939) in 23S rRNA. This Acidovorax sp. (strain JS42) protein is 23S rRNA (uracil(1939)-C(5))-methyltransferase RlmD.